Here is a 793-residue protein sequence, read N- to C-terminus: Facilitated trehalose transporter Tret1 (793 aa).

At 1 to 326 (MNRKVGPVLE…LEVYRPTTNP (326 aa)) the chain is on the cytoplasmic side. Disordered stretches follow at residues 99 to 148 (EKAK…EHKS) and 213 to 235 (RHISFKFDKEPSPSSSDEDFEPS). Over residues 104–113 (KSSLKSSRVS) the composition is skewed to low complexity. Over residues 115–125 (DQEDDRFDEDE) the composition is skewed to acidic residues. Basic and acidic residues predominate over residues 213–223 (RHISFKFDKEP). The helical transmembrane segment at 327-347 (IYIWTQVLAALSVSLGSMVVG) threads the bilayer. The Extracellular portion of the chain corresponds to 348 to 376 (FSSAYTSPALVSMKDRNITSFEVTDQSGS). The N-linked (GlcNAc...) asparagine glycan is linked to asparagine 364. A helical transmembrane segment spans residues 377-397 (WVGGIMPLAGLAGGILGGPMI). The Cytoplasmic portion of the chain corresponds to 398–411 (EYLGRKNTILATAT). Residues 412–432 (PFIISWLLIGCATHVAMVLVG) traverse the membrane as a helical segment. Residues 433-434 (RA) are Extracellular-facing. Residues 435–455 (LSGLCVGIASLSLPVYLGETV) traverse the membrane as a helical segment. The Cytoplasmic portion of the chain corresponds to 456-460 (QPEVR). Residues 461 to 481 (GTLGLLPTAFGNIGILLCFVA) traverse the membrane as a helical segment. Over 482–488 (GKYLDWS) the chain is Extracellular. Residues 489-509 (GLAFLGAALPIPFLLLMFLIP) form a helical membrane-spanning segment. Residues 510-572 (ETPRWYVSRN…DLLNKANLKP (63 aa)) lie on the Cytoplasmic side of the membrane. Residues 573-593 (LLISLGLMFFQQLSGINAVIF) form a helical membrane-spanning segment. At 594–609 (YTVQIFQSAGSTIDEK) the chain is on the extracellular side. The helical transmembrane segment at 610-630 (LCTIIVGVVNFIATFIATVLI) threads the bilayer. The Cytoplasmic segment spans residues 631 to 636 (DRLGRK). Residues 637–657 (ILLYISDVAMIITLMTLGTFF) form a helical membrane-spanning segment. The Extracellular segment spans residues 658 to 668 (YMKNNGDDVSE). A helical membrane pass occupies residues 669 to 689 (IGWLPLAAFVVFVVGFSLGFG). The Cytoplasmic segment spans residues 690 to 703 (PIPWLMMGEILPGK). The chain crosses the membrane as a helical span at residues 704–724 (IRGSAASVATAFNWSCTFVVT). Over 725–737 (KTFADITASIGNH) the chain is Extracellular. Residues 738–758 (GAFWMFGSICIVGLLFVIVYV) traverse the membrane as a helical segment. The Cytoplasmic segment spans residues 759–793 (PETQGKSLEDIERKMMGRVRRMSSVANIKPLSFNM).

This sequence belongs to the major facilitator superfamily. Sugar transporter (TC 2.A.1.1) family. Trehalose transporter subfamily.

It localises to the cell membrane. High-capacity facilitative transporter for trehalose. Does not transport maltose, sucrose or lactose. Mediates the bidirectional transfer of trehalose. Responsible for the transport of trehalose synthesized in the fat body and the incorporation of trehalose into other tissues that require a carbon source, thereby regulating trehalose levels in the hemolymph. In Anopheles gambiae (African malaria mosquito), this protein is Facilitated trehalose transporter Tret1.